Here is a 396-residue protein sequence, read N- to C-terminus: Alpha-1-antitrypsin (396 aa).

The first 2 residues, 1 to 2, serve as a signal peptide directing secretion; it reads HV. The tract at residues 1–24 is disordered; the sequence is HVEDPQGDAAQKTDTSHHDQEHST. Residues 14 to 24 show a composition bias toward basic and acidic residues; that stretch reads DTSHHDQEHST. Ser-16 is modified (phosphoserine). N-linked (GlcNAc...) asparagine glycans are attached at residues Asn-48, Asn-85, Asn-123, and Asn-249. Positions 351–370 are RCL; that stretch reads GAMFLEAIPMSIPPEVKFNK. Ser-361 carries the post-translational modification Phosphoserine.

Belongs to the serpin family. In terms of assembly, interacts with CELA2A. Interacts with ERGIC3 and LMAN1/ERGIC53. Interacts with PRSS1/Trypsin. Plasma.

The protein resides in the secreted. In terms of biological role, inhibitor of serine proteases. Its primary target is elastase, but it also has a moderate affinity for plasmin and thrombin. Inhibits trypsin, chymotrypsin and plasminogen activator. The protein is Alpha-1-antitrypsin (SERPINA1) of Chlorocebus aethiops (Green monkey).